The following is a 316-amino-acid chain: 4-hydroxy-3-methylbut-2-enyl diphosphate reductase (316 aa).

Cysteine 12 is a [4Fe-4S] cluster binding site. 2 residues coordinate (2E)-4-hydroxy-3-methylbut-2-enyl diphosphate: histidine 41 and histidine 74. Residues histidine 41 and histidine 74 each coordinate dimethylallyl diphosphate. Residues histidine 41 and histidine 74 each coordinate isopentenyl diphosphate. [4Fe-4S] cluster is bound at residue cysteine 96. Histidine 124 provides a ligand contact to (2E)-4-hydroxy-3-methylbut-2-enyl diphosphate. Dimethylallyl diphosphate is bound at residue histidine 124. Histidine 124 lines the isopentenyl diphosphate pocket. Glutamate 126 functions as the Proton donor in the catalytic mechanism. Threonine 167 serves as a coordination point for (2E)-4-hydroxy-3-methylbut-2-enyl diphosphate. Residue cysteine 197 participates in [4Fe-4S] cluster binding. Residues serine 225, serine 226, asparagine 227, and serine 269 each contribute to the (2E)-4-hydroxy-3-methylbut-2-enyl diphosphate site. Dimethylallyl diphosphate-binding residues include serine 225, serine 226, asparagine 227, and serine 269. Serine 225, serine 226, asparagine 227, and serine 269 together coordinate isopentenyl diphosphate.

This sequence belongs to the IspH family. As to quaternary structure, homodimer. [4Fe-4S] cluster is required as a cofactor.

The catalysed reaction is isopentenyl diphosphate + 2 oxidized [2Fe-2S]-[ferredoxin] + H2O = (2E)-4-hydroxy-3-methylbut-2-enyl diphosphate + 2 reduced [2Fe-2S]-[ferredoxin] + 2 H(+). It carries out the reaction dimethylallyl diphosphate + 2 oxidized [2Fe-2S]-[ferredoxin] + H2O = (2E)-4-hydroxy-3-methylbut-2-enyl diphosphate + 2 reduced [2Fe-2S]-[ferredoxin] + 2 H(+). It functions in the pathway isoprenoid biosynthesis; dimethylallyl diphosphate biosynthesis; dimethylallyl diphosphate from (2E)-4-hydroxy-3-methylbutenyl diphosphate: step 1/1. It participates in isoprenoid biosynthesis; isopentenyl diphosphate biosynthesis via DXP pathway; isopentenyl diphosphate from 1-deoxy-D-xylulose 5-phosphate: step 6/6. Functionally, catalyzes the conversion of 1-hydroxy-2-methyl-2-(E)-butenyl 4-diphosphate (HMBPP) into a mixture of isopentenyl diphosphate (IPP) and dimethylallyl diphosphate (DMAPP). Acts in the terminal step of the DOXP/MEP pathway for isoprenoid precursor biosynthesis. The protein is 4-hydroxy-3-methylbut-2-enyl diphosphate reductase of Salmonella agona (strain SL483).